The primary structure comprises 392 residues: tRNA (guanine-N(7)-)-methyltransferase (392 aa).

S-adenosyl-L-methionine contacts are provided by Glu123, Glu148, and Asp175. Substrate-binding residues include Lys201 and Asp231.

The protein belongs to the class I-like SAM-binding methyltransferase superfamily. TrmB family.

The catalysed reaction is guanosine(46) in tRNA + S-adenosyl-L-methionine = N(7)-methylguanosine(46) in tRNA + S-adenosyl-L-homocysteine. It functions in the pathway tRNA modification; N(7)-methylguanine-tRNA biosynthesis. Catalyzes the formation of N(7)-methylguanine at position 46 (m7G46) in tRNA. This chain is tRNA (guanine-N(7)-)-methyltransferase, found in Campylobacter jejuni subsp. doylei (strain ATCC BAA-1458 / RM4099 / 269.97).